Consider the following 492-residue polypeptide: 56 kDa U1 small nuclear ribonucleoprotein component (492 aa).

The segment covering 1–15 has biased composition (basic residues); the sequence is MRPRRRGLAYHHTKP. 2 disordered regions span residues 1-35 and 300-371; these read MRPR…QRRK and DQFP…NKPG. Over residues 18-30 the composition is skewed to polar residues; it reads QLSQGHYPTTSND. A compositionally biased stretch (low complexity) spans 310-321; it reads SNSPSSNSISSS. A compositionally biased stretch (polar residues) spans 329–353; the sequence is TSYQTQPQRHAVNKPSNVLNSSNRH.

Component of the 18S U1 snRNP particle, a subcomplex of the spliceosome. Interacts with the nuclear cap-binding complex CBC1-CBC2 (yCBC). Directly contacts intronic sequences of substrate pre-RNA.

The protein localises to the nucleus. Functionally, component of the U1 snRNP particle, which recognizes and binds the 5'-splice site of pre-mRNA. Together with other non-snRNP factors, U1 snRNP forms the spliceosomal commitment complex, that targets pre-mRNA to the splicing pathway. The polypeptide is 56 kDa U1 small nuclear ribonucleoprotein component (SNU56) (Saccharomyces cerevisiae (strain ATCC 204508 / S288c) (Baker's yeast)).